A 44-amino-acid chain; its full sequence is Photosystem I reaction center subunit IX (44 aa).

A helical membrane pass occupies residues Y7 to I27.

Belongs to the PsaJ family.

Its subcellular location is the plastid. The protein resides in the chloroplast thylakoid membrane. Functionally, may help in the organization of the PsaE and PsaF subunits. In Phalaenopsis aphrodite subsp. formosana (Moth orchid), this protein is Photosystem I reaction center subunit IX.